The chain runs to 115 residues: uncharacterized protein (115 aa).

It to M.tuberculosis Rv3073c.

This is an uncharacterized protein from Escherichia coli (strain K12).